Consider the following 171-residue polypeptide: Small ribosomal subunit protein uS13 (171 aa).

Residues 128-171 (HERGQKVRGQRTKSTGRTEGTIGVNVEAIKEEQAEDDAADGGEE) are disordered. Positions 160-171 (QAEDDAADGGEE) are enriched in acidic residues.

The protein belongs to the universal ribosomal protein uS13 family. As to quaternary structure, part of the 30S ribosomal subunit. Forms a loose heterodimer with protein S19. Forms two bridges to the 50S subunit in the 70S ribosome.

Its function is as follows. Located at the top of the head of the 30S subunit, it contacts several helices of the 16S rRNA. In the 70S ribosome it contacts the 23S rRNA (bridge B1a) and protein L5 of the 50S subunit (bridge B1b), connecting the 2 subunits; these bridges are implicated in subunit movement. This Halobacterium salinarum (strain ATCC 700922 / JCM 11081 / NRC-1) (Halobacterium halobium) protein is Small ribosomal subunit protein uS13.